Here is a 378-residue protein sequence, read N- to C-terminus: 2-aminoethylphosphonate--pyruvate transaminase 1 (378 aa).

The residue at position 194 (lysine 194) is an N6-(pyridoxal phosphate)lysine.

Belongs to the class-V pyridoxal-phosphate-dependent aminotransferase family. PhnW subfamily. As to quaternary structure, homodimer. Requires pyridoxal 5'-phosphate as cofactor.

The enzyme catalyses (2-aminoethyl)phosphonate + pyruvate = phosphonoacetaldehyde + L-alanine. Its function is as follows. Involved in phosphonate degradation. This Cupriavidus pinatubonensis (strain JMP 134 / LMG 1197) (Cupriavidus necator (strain JMP 134)) protein is 2-aminoethylphosphonate--pyruvate transaminase 1.